The primary structure comprises 61 residues: MFAGLPSLSHEQQQKAVERIHELMAQGISSGQAIALVAEELRATHTGEQIVARFEDEDEDE.

Belongs to the UPF0181 family.

The sequence is that of UPF0181 protein KPN78578_22920 from Klebsiella pneumoniae subsp. pneumoniae (strain ATCC 700721 / MGH 78578).